Consider the following 385-residue polypeptide: Protein kup-1 (385 aa).

2 disordered regions span residues 1–20 and 326–385; these read MDDE…VRED and SLAS…PDEY. 3 stretches are compositionally biased toward basic and acidic residues: residues 8–20, 339–351, and 364–385; these read GSDH…VRED, RTDE…DDIV, and GRVE…PDEY.

This is Protein kup-1 (kup-1) from Caenorhabditis elegans.